The following is a 363-amino-acid chain: NAD(P)H-quinone oxidoreductase subunit 1, chloroplastic (363 aa).

Transmembrane regions (helical) follow at residues 28 to 48 (WVLV…LVIV), 98 to 118 (FSIG…VIPF), 127 to 147 (LPIG…GLLM), 248 to 268 (YSGI…LVSS), 300 to 320 (VFGM…FLFI), and 343 to 363 (FLLP…LFSL).

It belongs to the complex I subunit 1 family. NDH is composed of at least 16 different subunits, 5 of which are encoded in the nucleus.

It localises to the plastid. Its subcellular location is the chloroplast thylakoid membrane. The catalysed reaction is a plastoquinone + NADH + (n+1) H(+)(in) = a plastoquinol + NAD(+) + n H(+)(out). The enzyme catalyses a plastoquinone + NADPH + (n+1) H(+)(in) = a plastoquinol + NADP(+) + n H(+)(out). In terms of biological role, NDH shuttles electrons from NAD(P)H:plastoquinone, via FMN and iron-sulfur (Fe-S) centers, to quinones in the photosynthetic chain and possibly in a chloroplast respiratory chain. The immediate electron acceptor for the enzyme in this species is believed to be plastoquinone. Couples the redox reaction to proton translocation, and thus conserves the redox energy in a proton gradient. The protein is NAD(P)H-quinone oxidoreductase subunit 1, chloroplastic of Cucumis sativus (Cucumber).